Reading from the N-terminus, the 182-residue chain is Adenine phosphoribosyltransferase (182 aa).

This sequence belongs to the purine/pyrimidine phosphoribosyltransferase family. In terms of assembly, homodimer.

It is found in the cytoplasm. The enzyme catalyses AMP + diphosphate = 5-phospho-alpha-D-ribose 1-diphosphate + adenine. Its pathway is purine metabolism; AMP biosynthesis via salvage pathway; AMP from adenine: step 1/1. In terms of biological role, catalyzes a salvage reaction resulting in the formation of AMP, that is energically less costly than de novo synthesis. This chain is Adenine phosphoribosyltransferase, found in Pseudomonas fluorescens (strain Pf0-1).